The following is a 44-amino-acid chain: Phosphatase RapE inhibitor (44 aa).

2 propeptides span residues 1–30 (MKSKLFISLSAVLIGLAFFGSMYNGEMKEA) and 36–44 (LAPTHEFLV).

It belongs to the Phr family. Post-translationally, contains a predicted signal peptide cleavage site in the N-terminal region, however the propeptide is probably only subject to processing events at the ends of the mature peptide.

Its subcellular location is the secreted. The protein localises to the cytoplasm. In terms of biological role, signaling molecule involved in the regulation of sporulation. Secreted during production, but the mature peptide acts intracellularly, indicating that it needs to be imported into the cell to function. Inhibitor of the RapE phosphatase activity. Does not inhibit the phosphatase activity of RapA and RapB. Probably plays a dispensable role in the overall context of sporulation initiation. In Bacillus subtilis (strain 168), this protein is Phosphatase RapE inhibitor (phrE).